The chain runs to 34 residues: Jingzhaotoxin F7-10.36 (34 aa).

Cystine bridges form between Cys2-Cys17, Cys9-Cys22, and Cys16-Cys29.

The protein belongs to the neurotoxin 10 (Hwtx-1) family. 50 (Jztz-F7) subfamily. Expressed by the venom gland.

Its subcellular location is the secreted. Functionally, probable ion channel inhibitor. The protein is Jingzhaotoxin F7-10.36 of Chilobrachys guangxiensis (Chinese earth tiger tarantula).